The sequence spans 175 residues: Nudix hydrolase 25 (175 aa).

Positions Gly7 to Lys155 constitute a Nudix hydrolase domain. Mn(2+)-binding residues include Gly40, Glu55, and Glu59. The short motif at Gly40–Gly61 is the Nudix box element.

The protein belongs to the Nudix hydrolase family. Requires Mn(2+) as cofactor.

It catalyses the reaction P(1),P(4)-bis(5'-guanosyl) tetraphosphate + H2O = GMP + GTP + 2 H(+). Mediates the hydrolysis of diadenosine 5',5''-P(1)P(4) tetraphosphate (Ap(4)A), a signaling molecule involved in regulation of DNA replication and repair. This Arabidopsis thaliana (Mouse-ear cress) protein is Nudix hydrolase 25.